A 50-amino-acid polypeptide reads, in one-letter code: Putative protein HokF (50 aa).

A helical membrane pass occupies residues Tyr5–Gly25.

The protein belongs to the Hok/Gef family.

The protein resides in the cell inner membrane. Functionally, toxic component of a type I toxin-antitoxin (TA) system. When overexpressed kills cells within minutes; causes collapse of the transmembrane potential and arrest of respiration. Its toxic effect is probably neutralized by an antisense antitoxin Sok RNA. This chain is Putative protein HokF (hokF), found in Escherichia coli O157:H7.